Consider the following 140-residue polypeptide: Large ribosomal subunit protein uL13 (140 aa).

It belongs to the universal ribosomal protein uL13 family. Part of the 50S ribosomal subunit.

This protein is one of the early assembly proteins of the 50S ribosomal subunit, although it is not seen to bind rRNA by itself. It is important during the early stages of 50S assembly. The chain is Large ribosomal subunit protein uL13 from Methanosarcina barkeri (strain Fusaro / DSM 804).